We begin with the raw amino-acid sequence, 269 residues long: UPF0761 membrane protein NTHI0384 (269 aa).

6 consecutive transmembrane segments (helical) span residues Met32–Phe52, Met89–Asp109, Phe128–Ile148, Leu168–Val188, Phe203–Phe223, and Ala232–Val252.

This sequence belongs to the UPF0761 family.

The protein resides in the cell inner membrane. This Haemophilus influenzae (strain 86-028NP) protein is UPF0761 membrane protein NTHI0384.